The chain runs to 84 residues: MPYSRDITKFITATEPEVGLPLLALQHSKSVIGVILLVISLLFIFIGIIILSVSSGHTTAASIFIVLSLILGGGGFFLIYKDNS.

A run of 2 helical transmembrane segments spans residues 31 to 51 (VIGV…IIIL) and 60 to 80 (AASI…FLIY).

This sequence belongs to the asfivirus EP84R family.

The protein resides in the virion membrane. This is Transmembrane protein EP84R from Ornithodoros (relapsing fever ticks).